We begin with the raw amino-acid sequence, 364 residues long: Protein trichome birefringence-like 40 (364 aa).

The helical; Signal-anchor for type II membrane protein transmembrane segment at 9–25 (LASLSLILFSSFPGLLA) threads the bilayer. The GDS motif signature appears at 118 to 120 (GDS). Positions 341 to 355 (DCSHWCLPGLPDTWN) match the DCXHWCLPGXXDXWN motif motif.

Belongs to the PC-esterase family. TBL subfamily.

The protein resides in the membrane. May act as a bridging protein that binds pectin and other cell wall polysaccharides. Probably involved in maintaining esterification of pectins. May be involved in the specific O-acetylation of cell wall polymers. The protein is Protein trichome birefringence-like 40 (TBL40) of Arabidopsis thaliana (Mouse-ear cress).